A 220-amino-acid polypeptide reads, in one-letter code: Aspartic protease inhibitor 2 (220 aa).

An N-terminal signal peptide occupies residues 1–23; sequence MMKCLFLLCLCLLPIVVFSSTFT. The propeptide occupies 24-32; that stretch reads SQNLIDLPS. Residues 26 to 31 carry the Vacuolar targeting signal motif; sequence NLIDLP. N-linked (GlcNAc...) asparagine glycosylation is present at N51. Disulfide bonds link C80–C125 and C174–C185.

The protein belongs to the protease inhibitor I3 (leguminous Kunitz-type inhibitor) family. As to expression, tubers.

The protein localises to the vacuole. Functionally, inhibitor of cathepsin D (aspartic protease). May also inhibit trypsin and chymotrypsin (serine proteases). Protects the plant by inhibiting proteases of invading organisms. This chain is Aspartic protease inhibitor 2, found in Solanum tuberosum (Potato).